The following is a 305-amino-acid chain: Homoserine kinase (305 aa).

90–100 (PLARGLGSSAS) lines the ATP pocket.

It belongs to the GHMP kinase family. Homoserine kinase subfamily.

Its subcellular location is the cytoplasm. The catalysed reaction is L-homoserine + ATP = O-phospho-L-homoserine + ADP + H(+). It functions in the pathway amino-acid biosynthesis; L-threonine biosynthesis; L-threonine from L-aspartate: step 4/5. Its function is as follows. Catalyzes the ATP-dependent phosphorylation of L-homoserine to L-homoserine phosphate. The protein is Homoserine kinase of Staphylococcus saprophyticus subsp. saprophyticus (strain ATCC 15305 / DSM 20229 / NCIMB 8711 / NCTC 7292 / S-41).